We begin with the raw amino-acid sequence, 225 residues long: NAD(P)H-quinone oxidoreductase subunit K, chloroplastic (225 aa).

The [4Fe-4S] cluster site is built by C43, C44, C108, and C139.

It belongs to the complex I 20 kDa subunit family. In terms of assembly, NDH is composed of at least 16 different subunits, 5 of which are encoded in the nucleus. It depends on [4Fe-4S] cluster as a cofactor.

The protein resides in the plastid. It is found in the chloroplast thylakoid membrane. It catalyses the reaction a plastoquinone + NADH + (n+1) H(+)(in) = a plastoquinol + NAD(+) + n H(+)(out). It carries out the reaction a plastoquinone + NADPH + (n+1) H(+)(in) = a plastoquinol + NADP(+) + n H(+)(out). NDH shuttles electrons from NAD(P)H:plastoquinone, via FMN and iron-sulfur (Fe-S) centers, to quinones in the photosynthetic chain and possibly in a chloroplast respiratory chain. The immediate electron acceptor for the enzyme in this species is believed to be plastoquinone. Couples the redox reaction to proton translocation, and thus conserves the redox energy in a proton gradient. The polypeptide is NAD(P)H-quinone oxidoreductase subunit K, chloroplastic (Brachypodium distachyon (Purple false brome)).